The chain runs to 242 residues: MSFSEDQAMEEAKLRNDETEEQDPVVRTYPVFFSPGLRNNLLLNQFPLRPKNRTYSDANGEAPIDVRVKPKTGWMEVDVPIPTTKYYNEDKAMKYGNGKKPIQTQTLSGRLQKPRTNLMVGLIRDGQFHIVPLRGLTQLRPSMKHVNEYTQKLKAAAGPSNSSSGTSTPRGPIRAVQVTAKQNTEAPKVSTTHIVRATEEEEWVELDCRPERESESILKQLECPIEHQPNECAAVDEDYSFI.

Disordered regions lie at residues 1 to 22 and 153 to 172; these read MSFS…TEEQ and LKAA…PRGP. Over residues 155 to 172 the composition is skewed to low complexity; sequence AAAGPSNSSSGTSTPRGP.

As to quaternary structure, component of the RNA polymerase III (Pol III) complex consisting of 17 subunits.

It is found in the cytoplasm. The protein resides in the nucleus. Its function is as follows. DNA-dependent RNA polymerase catalyzes the transcription of DNA into RNA using the four ribonucleoside triphosphates as substrates. Specific peripheric component of RNA polymerase III which synthesizes small RNAs, such as 5S rRNA and tRNAs. The RPC53/RPC4-RPC37/RPC5 subcomplex is required for terminator recognition and reinitiation. This is DNA-directed RNA polymerase III subunit rpc5 (rpc37) from Schizosaccharomyces pombe (strain 972 / ATCC 24843) (Fission yeast).